Consider the following 90-residue polypeptide: DNA-binding protein HTa (90 aa).

Belongs to the bacterial histone-like protein family. In terms of assembly, homotetramer.

Its function is as follows. Histone-like DNA-binding protein which is capable of wrapping DNA to stabilize it, and thus to prevent its denaturation under extreme environmental conditions. This Thermoplasma acidophilum (strain ATCC 25905 / DSM 1728 / JCM 9062 / NBRC 15155 / AMRC-C165) protein is DNA-binding protein HTa.